A 315-amino-acid chain; its full sequence is ADP/ATP translocase (315 aa).

The Mitochondrial intermembrane portion of the chain corresponds to 1 to 13; the sequence is MSNKQETKILGMP. Solcar repeat units follow at residues 13-106 and 118-210; these read PPFV…FKAM and KWMA…IKPV. The chain crosses the membrane as a helical span at residues 14 to 37; it reads PFVVDFLMGGVSAAVSKTAAAPIE. Lys30 lines the bongkrekate pocket. Residues 38–80 are Mitochondrial matrix-facing; the sequence is RIKLLVQNQDEMIKAGRLDRRYNGIIDCFRRTTADEGLMALWR. Residues Ile62 and 81–83 each bind a cardiolipin; that span reads GNT. A helical transmembrane segment spans residues 81–104; the sequence is GNTANVIRYFPTQALNFAFRDKFK. Arg88 lines the ADP pocket. Bongkrekate contacts are provided by residues 88 to 89 and Asn96; that span reads RY. Over 105-115 the chain is Mitochondrial intermembrane; the sequence is AMFGYKKDKDG. A helical transmembrane segment spans residues 116–145; sequence YAKWMAGNLASGGAAGATSLLFVYSLDYAR. Topologically, residues 146-184 are mitochondrial matrix; that stretch reads TRLANDAKSAKGGGARQFNGLIDVYRKTLASDGIAGLYR. Residues Leu166 and 184 to 185 each bind a cardiolipin; that span reads RG. The chain crosses the membrane as a helical span at residues 185–213; sequence GFGPSVAGIVVYRGLYFGMYDSIKPVVLV. Residue 196–197 participates in bongkrekate binding; it reads YR. Residues 214 to 216 lie on the Mitochondrial intermembrane side of the membrane; the sequence is GPL. Residues 217–242 traverse the membrane as a helical segment; the sequence is ANNFLASFLLGWCVTTGAGIASYPLD. Residues 218-304 form a Solcar repeat; that stretch reads NNFLASFLLG…LSIYDQLQIL (87 aa). The Mitochondrial matrix segment spans residues 243 to 283; the sequence is TVRRRMMMTSGEAVKYKSSIDAFRQIIAKEGVKSLFKGAGA. An ADP-binding site is contributed by Arg245. The Nucleotide carrier signature motif signature appears at 245–250; it reads RRRMMM. A cardiolipin contacts are provided by residues 260 to 261 and 280 to 282; these read SS and GAG. Residues 284 to 304 form a helical membrane-spanning segment; the sequence is NILRGVAGAGVLSIYDQLQIL. The Mitochondrial intermembrane segment spans residues 305-315; that stretch reads LFGKAFKGGSG.

This sequence belongs to the mitochondrial carrier (TC 2.A.29) family. As to quaternary structure, monomer.

Its subcellular location is the mitochondrion inner membrane. It catalyses the reaction ADP(in) + ATP(out) = ADP(out) + ATP(in). With respect to regulation, the matrix-open state (m-state) is inhibited by the membrane-permeable bongkrekic acid (BKA). The cytoplasmic-open state (c-state) is inhibited by the membrane-impermeable toxic inhibitor carboxyatractyloside (CATR). Functionally, ADP:ATP antiporter that mediates import of ADP into the mitochondrial matrix for ATP synthesis, and export of ATP out to fuel the cell. Cycles between the cytoplasmic-open state (c-state) and the matrix-open state (m-state): operates by the alternating access mechanism with a single substrate-binding site intermittently exposed to either the cytosolic (c-state) or matrix (m-state) side of the inner mitochondrial membrane. The chain is ADP/ATP translocase from Thermothelomyces thermophilus (strain ATCC 42464 / BCRC 31852 / DSM 1799) (Sporotrichum thermophile).